A 644-amino-acid chain; its full sequence is MSSLGTEQFSERSQWVLNSPNPPPLTKKFLGPLKDNKFFTSSSSKKETRAVSFLASLFPILSWIRTYSATKFKDDLLSGLTLASLSIPQSIGYANLAKLDPQYGLYTSVIPPVIYALMGSSREIAIGPVAVVSMLLSSLVPKVIDPDAHPNDYRNLVFTVTLFAGIFQTAFGVLRLGFLVDFLSHAALVGFMAGAAIVIGLQQLKGLLGLTHFTTKTDAVAVLKSVYTSLHQQITSSENWSPLNFVIGCSFLIFLLAARFIGRRNKKFFWLPAIAPLLSVILSTLIVFLSKGDKHGVNIIKHVQGGLNPSSVHKLQLNGPHVGQAAKIGLISAIIALTEAIAVGRSFANIKGYHLDGNKEMLAMGCMNIAGSLTSCYVSTGSFSRTAVNFSAGCKTAVSNIVMAVTVLLCLELFTRLLYYTPMAILASIILSALPGLIDIGEAYHIWKVDKFDFLACLGAFFGVLFVSIEIGLLIALSISFAKILLQAIRPGVEVLGRIPTTEAYCDVAQYPMAVTTPGILVIRISSGSLCFANAGFVRERILKWVEDEEQDNIEEAAKGRVQAIIIDMTDLTNVDTSGILALEELHKKLLSRGVELAMVNPRWEVIHKLKVANFVDKIGKERVFLTVAEAVDACLSSRFANSA.

A compositionally biased stretch (polar residues) spans 1-19 (MSSLGTEQFSERSQWVLNS). The disordered stretch occupies residues 1–20 (MSSLGTEQFSERSQWVLNSP). 13 helical membrane passes run 50–70 (AVSF…YSAT), 76–96 (LLSG…YANL), 99–119 (LDPQ…ALMG), 124–144 (IAIG…PKVI), 156–176 (LVFT…VLRL), 179–199 (LVDF…AIVI), 242–262 (PLNF…RFIG), 268–288 (FFWL…LIVF), 328–348 (IGLI…RSFA), 394–414 (CKTA…LELF), 418–438 (LYYT…PGLI), 455–475 (LACL…GLLI), and 518–538 (PGIL…AGFV). In terms of domain architecture, STAS spans 511-635 (YPMAVTTPGI…LTVAEAVDAC (125 aa)).

It belongs to the SLC26A/SulP transporter (TC 2.A.53) family.

It localises to the membrane. In terms of biological role, low-affinity H(+)/sulfate cotransporter which may be involved in the internal transport of sulfate between cellular or subcellular compartments within the plant. The protein is Low affinity sulfate transporter 3 (ST3) of Stylosanthes hamata (Caribbean stylo).